The primary structure comprises 248 residues: MKSYIEPFIASKALSQNSQKAYRYDLQQFCQLIGERVNQDKLLLYQNSIANLSLSAKKRKLSTANQFLYYLYQIKYLNSYFRLTDTMKVMRTEKQQAAIINTDIFYQKTPFVWGQLISLLILELGLTPSEVAGIEVANLDLNFQMLTLKTKKGVRVLPLSQILIPFLEQQLVGKEAYLFEHRGIPFSRQWFFNHLKTFVRSIGYEGLTAQKLREQFILKEKLAGKSIIELSDILGLKSPVTLEKYYKS.

The region spanning M1–Y72 is the Core-binding (CB) domain. Positions D85–S248 constitute a Tyr recombinase domain. Active-site residues include K149 and R213. The active-site O-(3'-phospho-DNA)-tyrosine intermediate is the Y245.

Belongs to the 'phage' integrase family. XerD-like subfamily.

It is found in the cytoplasm. Putative tyrosine recombinase. Not involved in the cutting and rejoining of the recombining DNA molecules on dif(SL) site. The protein is Tyrosine recombinase XerD-like of Streptococcus pyogenes serotype M28 (strain MGAS6180).